Here is a 320-residue protein sequence, read N- to C-terminus: Ferrochelatase (320 aa).

Histidine 194 and glutamate 275 together coordinate Fe cation.

This sequence belongs to the ferrochelatase family. In terms of assembly, monomer.

It localises to the cytoplasm. The catalysed reaction is heme b + 2 H(+) = protoporphyrin IX + Fe(2+). Its pathway is porphyrin-containing compound metabolism; protoheme biosynthesis; protoheme from protoporphyrin-IX: step 1/1. Catalyzes the ferrous insertion into protoporphyrin IX. In Escherichia coli (strain 55989 / EAEC), this protein is Ferrochelatase.